Here is a 137-residue protein sequence, read N- to C-terminus: MLQPKRTKFRKQMKGRNRGLAQRGSKVSFGEFGLKAVARGRITARQIEAARRAMTRHVKRGGKIWIRVFPDKPITEKPLEVRQGKGKGNVEYWVAQIQPGKVLYEMEGVSEELAREAFALAAAKLPLNTTFVKRSVM.

Positions Met1–Asn17 are enriched in basic residues. The disordered stretch occupies residues Met1–Gln22.

This sequence belongs to the universal ribosomal protein uL16 family. As to quaternary structure, part of the 50S ribosomal subunit.

In terms of biological role, binds 23S rRNA and is also seen to make contacts with the A and possibly P site tRNAs. The chain is Large ribosomal subunit protein uL16 from Teredinibacter turnerae (strain ATCC 39867 / T7901).